A 121-amino-acid polypeptide reads, in one-letter code: Chorion class CA protein ERA.4 (121 aa).

The N-terminal stretch at 1–23 is a signal peptide; the sequence is MSSSFFCFFLFCFQTCLIQNVYS. A left arm region spans residues 24 to 57; that stretch reads QCLGRVGPGGPPLGPYGGPLGGPGYGPVGYGGCG. The tract at residues 58-105 is central domain; the sequence is GYGGSGIGNVAVAGELPVAGSAAVLGQVPVIGAVEFAGPACAVGSVSI. Residues 106–121 form a right arm region; that stretch reads SGACGPTCGCGGSPYY.

It belongs to the chorion protein family.

In terms of biological role, this protein is one of many from the eggshell of the silk moth. The polypeptide is Chorion class CA protein ERA.4 (ERA.4) (Bombyx mori (Silk moth)).